Consider the following 556-residue polypeptide: Urocanate hydratase (556 aa).

NAD(+) contacts are provided by residues 52 to 53, Gln130, 176 to 178, Glu196, Arg201, 242 to 243, 263 to 267, 273 to 274, and Tyr322; these read GG, GMG, NA, QTSAH, and YL. Cys410 is an active-site residue. Gly492 is an NAD(+) binding site.

This sequence belongs to the urocanase family. NAD(+) serves as cofactor.

Its subcellular location is the cytoplasm. It carries out the reaction 4-imidazolone-5-propanoate = trans-urocanate + H2O. It participates in amino-acid degradation; L-histidine degradation into L-glutamate; N-formimidoyl-L-glutamate from L-histidine: step 2/3. Catalyzes the conversion of urocanate to 4-imidazolone-5-propionate. The chain is Urocanate hydratase from Bradyrhizobium diazoefficiens (strain JCM 10833 / BCRC 13528 / IAM 13628 / NBRC 14792 / USDA 110).